A 941-amino-acid chain; its full sequence is Isoleucine--tRNA ligase (941 aa).

The 'HIGH' region motif lies at 59-69; that stretch reads PYANGNIHIGH. Glu-562 contacts L-isoleucyl-5'-AMP. The short motif at 603 to 607 is the 'KMSKS' region element; it reads KMSKS. Lys-606 serves as a coordination point for ATP. Residues Cys-904, Cys-907, Cys-924, and Cys-927 each coordinate Zn(2+).

Belongs to the class-I aminoacyl-tRNA synthetase family. IleS type 1 subfamily. In terms of assembly, monomer. The cofactor is Zn(2+).

The protein resides in the cytoplasm. The catalysed reaction is tRNA(Ile) + L-isoleucine + ATP = L-isoleucyl-tRNA(Ile) + AMP + diphosphate. Its function is as follows. Catalyzes the attachment of isoleucine to tRNA(Ile). As IleRS can inadvertently accommodate and process structurally similar amino acids such as valine, to avoid such errors it has two additional distinct tRNA(Ile)-dependent editing activities. One activity is designated as 'pretransfer' editing and involves the hydrolysis of activated Val-AMP. The other activity is designated 'posttransfer' editing and involves deacylation of mischarged Val-tRNA(Ile). In Haemophilus influenzae (strain ATCC 51907 / DSM 11121 / KW20 / Rd), this protein is Isoleucine--tRNA ligase.